The following is a 422-amino-acid chain: Putative nickel insertion protein (422 aa).

Belongs to the LarC family.

The sequence is that of Putative nickel insertion protein from Synechocystis sp. (strain ATCC 27184 / PCC 6803 / Kazusa).